The chain runs to 398 residues: Tear acid lipase-like protein (398 aa).

The first 19 residues, Met-1 to Cys-19, serve as a signal peptide directing secretion. Catalysis depends on Ser-170, which acts as the Nucleophile. Cys-243 and Cys-252 are joined by a disulfide. Asn-268 carries N-linked (GlcNAc...) asparagine glycosylation. Catalysis depends on charge relay system residues Asp-340 and His-369.

The protein belongs to the AB hydrolase superfamily. Lipase family. As to quaternary structure, monomer. In terms of processing, N-glycosylated. In terms of tissue distribution, expressed in female lacrimal gland acinar cells from where it is secreted into tears (at protein level).

It is found in the secreted. Its function is as follows. Female-specific protein which lacks detectable lipase activity against a range of substrates. Binds the hydrophobic lipid 1-aminoanthracene with high affinity. This chain is Tear acid lipase-like protein, found in Mesocricetus auratus (Golden hamster).